Consider the following 269-residue polypeptide: Tryptophan synthase alpha chain (269 aa).

Active-site proton acceptor residues include Glu-49 and Asp-60.

The protein belongs to the TrpA family. Tetramer of two alpha and two beta chains.

The enzyme catalyses (1S,2R)-1-C-(indol-3-yl)glycerol 3-phosphate + L-serine = D-glyceraldehyde 3-phosphate + L-tryptophan + H2O. It functions in the pathway amino-acid biosynthesis; L-tryptophan biosynthesis; L-tryptophan from chorismate: step 5/5. Its function is as follows. The alpha subunit is responsible for the aldol cleavage of indoleglycerol phosphate to indole and glyceraldehyde 3-phosphate. The sequence is that of Tryptophan synthase alpha chain from Buchnera aphidicola subsp. Acyrthosiphon pisum (strain APS) (Acyrthosiphon pisum symbiotic bacterium).